Here is a 43-residue protein sequence, read N- to C-terminus: Protein PsbN (43 aa).

A helical transmembrane segment spans residues 7–29 (VTIFLSGLLVSFTGYALYTAFGQ).

This sequence belongs to the PsbN family.

Its subcellular location is the plastid. The protein localises to the chloroplast thylakoid membrane. In terms of biological role, may play a role in photosystem I and II biogenesis. The protein is Protein PsbN of Ipomoea purpurea (Common morning glory).